The chain runs to 503 residues: ATP synthase subunit beta (503 aa).

157–164 (GGAGVGKT) contacts ATP.

This sequence belongs to the ATPase alpha/beta chains family. F-type ATPases have 2 components, CF(1) - the catalytic core - and CF(0) - the membrane proton channel. CF(1) has five subunits: alpha(3), beta(3), gamma(1), delta(1), epsilon(1). CF(0) has three main subunits: a(1), b(2) and c(9-12). The alpha and beta chains form an alternating ring which encloses part of the gamma chain. CF(1) is attached to CF(0) by a central stalk formed by the gamma and epsilon chains, while a peripheral stalk is formed by the delta and b chains.

The protein resides in the cell membrane. It catalyses the reaction ATP + H2O + 4 H(+)(in) = ADP + phosphate + 5 H(+)(out). Its function is as follows. Produces ATP from ADP in the presence of a proton gradient across the membrane. The catalytic sites are hosted primarily by the beta subunits. This chain is ATP synthase subunit beta, found in Christiangramia forsetii (strain DSM 17595 / CGMCC 1.15422 / KT0803) (Gramella forsetii).